Consider the following 239-residue polypeptide: Phosphoribosylaminoimidazole-succinocarboxamide synthase (239 aa).

The protein belongs to the SAICAR synthetase family.

It catalyses the reaction 5-amino-1-(5-phospho-D-ribosyl)imidazole-4-carboxylate + L-aspartate + ATP = (2S)-2-[5-amino-1-(5-phospho-beta-D-ribosyl)imidazole-4-carboxamido]succinate + ADP + phosphate + 2 H(+). It participates in purine metabolism; IMP biosynthesis via de novo pathway; 5-amino-1-(5-phospho-D-ribosyl)imidazole-4-carboxamide from 5-amino-1-(5-phospho-D-ribosyl)imidazole-4-carboxylate: step 1/2. The protein is Phosphoribosylaminoimidazole-succinocarboxamide synthase of Bacillus cytotoxicus (strain DSM 22905 / CIP 110041 / 391-98 / NVH 391-98).